A 134-amino-acid polypeptide reads, in one-letter code: MGSLNVSIVTPDGPVYEGVAQMVIARTKAGELGILPGHVPLVAPLKIDIVRLKVESGEEWVAVNGGFMEVNGEEVNILADTAEREQDIDIDRAEKAKQRAEEELSRAKEQKVDEVLAQLALQRAINRIHAKEHN.

The protein belongs to the ATPase epsilon chain family. In terms of assembly, F-type ATPases have 2 components, CF(1) - the catalytic core - and CF(0) - the membrane proton channel. CF(1) has five subunits: alpha(3), beta(3), gamma(1), delta(1), epsilon(1). CF(0) has three main subunits: a, b and c.

The protein localises to the cell membrane. Functionally, produces ATP from ADP in the presence of a proton gradient across the membrane. This Listeria monocytogenes serotype 4a (strain HCC23) protein is ATP synthase epsilon chain.